A 189-amino-acid polypeptide reads, in one-letter code: Protein GrpE (189 aa).

Basic and acidic residues predominate over residues 1 to 14 (MTDHTPLQPKHEIT). The disordered stretch occupies residues 1–23 (MTDHTPLQPKHEITDQADQDTSA).

The protein belongs to the GrpE family. As to quaternary structure, homodimer.

The protein resides in the cytoplasm. In terms of biological role, participates actively in the response to hyperosmotic and heat shock by preventing the aggregation of stress-denatured proteins, in association with DnaK and GrpE. It is the nucleotide exchange factor for DnaK and may function as a thermosensor. Unfolded proteins bind initially to DnaJ; upon interaction with the DnaJ-bound protein, DnaK hydrolyzes its bound ATP, resulting in the formation of a stable complex. GrpE releases ADP from DnaK; ATP binding to DnaK triggers the release of the substrate protein, thus completing the reaction cycle. Several rounds of ATP-dependent interactions between DnaJ, DnaK and GrpE are required for fully efficient folding. The sequence is that of Protein GrpE from Lawsonia intracellularis (strain PHE/MN1-00).